The primary structure comprises 263 residues: Shikimate dehydrogenase (NADP(+)) (263 aa).

Shikimate-binding positions include 14–16 (SLS) and Thr-60. The active-site Proton acceptor is the Lys-64. Shikimate is bound by residues Asn-85 and Asp-100. NADP(+)-binding positions include 123-127 (GAGGA), 146-151 (NRTPQR), and Leu-205. Position 207 (Tyr-207) interacts with shikimate. Residue Gly-228 coordinates NADP(+).

The protein belongs to the shikimate dehydrogenase family. As to quaternary structure, homodimer.

It catalyses the reaction shikimate + NADP(+) = 3-dehydroshikimate + NADPH + H(+). The protein operates within metabolic intermediate biosynthesis; chorismate biosynthesis; chorismate from D-erythrose 4-phosphate and phosphoenolpyruvate: step 4/7. Functionally, involved in the biosynthesis of the chorismate, which leads to the biosynthesis of aromatic amino acids. Catalyzes the reversible NADPH linked reduction of 3-dehydroshikimate (DHSA) to yield shikimate (SA). This is Shikimate dehydrogenase (NADP(+)) from Thermus thermophilus (strain ATCC BAA-163 / DSM 7039 / HB27).